The primary structure comprises 633 residues: Ankyrin repeat and SOCS box protein 2 (633 aa).

A UIM domain is found at 26–45; that stretch reads SEDELVQMAIEQSLADKTRG. ANK repeat units lie at residues 102–131, 135–165, 169–198, 202–231, 235–264, 268–297, 301–330, 334–363, 366–395, 408–437, 438–467, and 474–502; these read APVD…NLSE, EGWL…VIDQ, QEET…EPDI, SRET…DTNH, RGWT…KVEA, YGIT…DINT, DSAS…DANK, DGML…RTRV, SGIS…DVNA, RRSS…DPNR, DVIN…NIDA, and TAFP…NGEP. At Ser369 the chain carries Phosphoserine. Positions 579 to 633 constitute an SOCS box domain; that stretch reads EDWAVIKEKAEPPRPLAHLCRLRVRKAIGKYRIKLLDTLPLPGRLIRYLKYENTQ.

Belongs to the ankyrin SOCS box (ASB) family. In terms of assembly, component of a probable ECS E3 ubiquitin-protein ligase complex which contains CUL5, either RBX1 or RNF7/RBX2, Elongin BC complex (ELOB and ELOC) and ASB2. Interacts with SKP2. Through its interaction with SKP2, likely to bridge the formation of dimeric E3-ubiquitin-protein ligase complexes composed of an ECS complex and an SCF(SKP2) complex. Interacts with JAK2; the interaction targets JAK2 for Notch-mediated proteasomal degradation. Interacts with TCF3/E2A; the interaction is mediated by SKP2 and targets TCF3 for Notch-mediated proteasomal degradation. Interacts with DES. Monoubiquitinated.

The protein localises to the cytoplasm. The protein resides in the cytoskeleton. Its subcellular location is the stress fiber. It localises to the myofibril. It is found in the sarcomere. The protein localises to the z line. It functions in the pathway protein modification; protein ubiquitination. Its function is as follows. Substrate-recognition component of a SCF-like ECS (Elongin-Cullin-SOCS-box protein) E3 ubiquitin-protein ligase complex which mediates the ubiquitination and subsequent proteasomal degradation of target proteins. Mediates Notch-induced ubiquitination and degradation of substrates including E2A and JAK2. Required during embryonic heart development for complete heart looping. Required for cardiomyocyte differentiation. Involved in myogenic differentiation and targets filamin FLNB for proteasomal degradation but not filamin FLNA. Also targets DES for proteasomal degradation. Acts as a negative regulator of skeletal muscle mass. The sequence is that of Ankyrin repeat and SOCS box protein 2 from Bos taurus (Bovine).